We begin with the raw amino-acid sequence, 98 residues long: NADH-ubiquinone oxidoreductase chain 4L (98 aa).

3 consecutive transmembrane segments (helical) span residues Met-1–Met-21, Ala-29–Leu-49, and Met-59–Val-79.

This sequence belongs to the complex I subunit 4L family. As to quaternary structure, core subunit of respiratory chain NADH dehydrogenase (Complex I) which is composed of 45 different subunits.

Its subcellular location is the mitochondrion inner membrane. It catalyses the reaction a ubiquinone + NADH + 5 H(+)(in) = a ubiquinol + NAD(+) + 4 H(+)(out). Its function is as follows. Core subunit of the mitochondrial membrane respiratory chain NADH dehydrogenase (Complex I) which catalyzes electron transfer from NADH through the respiratory chain, using ubiquinone as an electron acceptor. Part of the enzyme membrane arm which is embedded in the lipid bilayer and involved in proton translocation. This chain is NADH-ubiquinone oxidoreductase chain 4L (MT-ND4L), found in Hyperoodon ampullatus (Northern bottlenose whale).